A 361-amino-acid polypeptide reads, in one-letter code: Chorismate synthase (361 aa).

NADP(+)-binding residues include R48 and R54. FMN-binding positions include 125-127, 238-239, G278, 293-297, and R319; these read RSS, NA, and KPTSS.

The protein belongs to the chorismate synthase family. Homotetramer. The cofactor is FMNH2.

The catalysed reaction is 5-O-(1-carboxyvinyl)-3-phosphoshikimate = chorismate + phosphate. The protein operates within metabolic intermediate biosynthesis; chorismate biosynthesis; chorismate from D-erythrose 4-phosphate and phosphoenolpyruvate: step 7/7. Functionally, catalyzes the anti-1,4-elimination of the C-3 phosphate and the C-6 proR hydrogen from 5-enolpyruvylshikimate-3-phosphate (EPSP) to yield chorismate, which is the branch point compound that serves as the starting substrate for the three terminal pathways of aromatic amino acid biosynthesis. This reaction introduces a second double bond into the aromatic ring system. This chain is Chorismate synthase, found in Vibrio vulnificus (strain CMCP6).